The following is a 133-amino-acid chain: Ribonuclease P protein component (133 aa).

Belongs to the RnpA family. In terms of assembly, consists of a catalytic RNA component (M1 or rnpB) and a protein subunit.

It carries out the reaction Endonucleolytic cleavage of RNA, removing 5'-extranucleotides from tRNA precursor.. RNaseP catalyzes the removal of the 5'-leader sequence from pre-tRNA to produce the mature 5'-terminus. It can also cleave other RNA substrates such as 4.5S RNA. The protein component plays an auxiliary but essential role in vivo by binding to the 5'-leader sequence and broadening the substrate specificity of the ribozyme. The polypeptide is Ribonuclease P protein component (Pseudomonas entomophila (strain L48)).